Reading from the N-terminus, the 81-residue chain is Photosystem I iron-sulfur center (81 aa).

2 consecutive 4Fe-4S ferredoxin-type domains span residues 2-31 and 39-68; these read AHSVKVYDTCIGCTQCVRACPCDVLEMVPR and IASAPRTEDCIGCKRCETACPTDFLSVRVY. [4Fe-4S] cluster-binding residues include Cys11, Cys14, Cys17, Cys21, Cys48, Cys51, Cys54, and Cys58.

The eukaryotic PSI reaction center is composed of at least 11 subunits. It depends on [4Fe-4S] cluster as a cofactor.

It is found in the plastid. Its subcellular location is the chloroplast thylakoid membrane. The enzyme catalyses reduced [plastocyanin] + hnu + oxidized [2Fe-2S]-[ferredoxin] = oxidized [plastocyanin] + reduced [2Fe-2S]-[ferredoxin]. Functionally, apoprotein for the two 4Fe-4S centers FA and FB of photosystem I (PSI); essential for photochemical activity. FB is the terminal electron acceptor of PSI, donating electrons to ferredoxin. The C-terminus interacts with PsaA/B/D and helps assemble the protein into the PSI complex. Required for binding of PsaD and PsaE to PSI. PSI is a plastocyanin/cytochrome c6-ferredoxin oxidoreductase, converting photonic excitation into a charge separation, which transfers an electron from the donor P700 chlorophyll pair to the spectroscopically characterized acceptors A0, A1, FX, FA and FB in turn. This Antithamnion sp. (Red alga) protein is Photosystem I iron-sulfur center.